Consider the following 221-residue polypeptide: 7-cyano-7-deazaguanine synthase (221 aa).

7–17 (LSGGLDSAVSL) lines the ATP pocket. Zn(2+)-binding residues include Cys192, Cys200, Cys203, and Cys206.

It belongs to the QueC family. As to quaternary structure, homodimer. Zn(2+) is required as a cofactor.

It carries out the reaction 7-carboxy-7-deazaguanine + NH4(+) + ATP = 7-cyano-7-deazaguanine + ADP + phosphate + H2O + H(+). The protein operates within purine metabolism; 7-cyano-7-deazaguanine biosynthesis. Catalyzes the ATP-dependent conversion of 7-carboxy-7-deazaguanine (CDG) to 7-cyano-7-deazaguanine (preQ(0)). This is 7-cyano-7-deazaguanine synthase from Pelotomaculum thermopropionicum (strain DSM 13744 / JCM 10971 / SI).